The following is a 143-amino-acid chain: ATP synthase subunit b' (143 aa).

A helical transmembrane segment spans residues 6 to 26 (ATLPLMALQFLVLAVVLNAVF).

Belongs to the ATPase B chain family. F-type ATPases have 2 components, F(1) - the catalytic core - and F(0) - the membrane proton channel. F(1) has five subunits: alpha(3), beta(3), gamma(1), delta(1), epsilon(1). F(0) has four main subunits: a(1), b(1), b'(1) and c(10-14). The alpha and beta chains form an alternating ring which encloses part of the gamma chain. F(1) is attached to F(0) by a central stalk formed by the gamma and epsilon chains, while a peripheral stalk is formed by the delta, b and b' chains.

Its subcellular location is the cellular thylakoid membrane. Functionally, f(1)F(0) ATP synthase produces ATP from ADP in the presence of a proton or sodium gradient. F-type ATPases consist of two structural domains, F(1) containing the extramembraneous catalytic core and F(0) containing the membrane proton channel, linked together by a central stalk and a peripheral stalk. During catalysis, ATP synthesis in the catalytic domain of F(1) is coupled via a rotary mechanism of the central stalk subunits to proton translocation. Component of the F(0) channel, it forms part of the peripheral stalk, linking F(1) to F(0). The b'-subunit is a diverged and duplicated form of b found in plants and photosynthetic bacteria. This Gloeothece citriformis (strain PCC 7424) (Cyanothece sp. (strain PCC 7424)) protein is ATP synthase subunit b'.